The following is a 330-amino-acid chain: AH receptor-interacting protein (330 aa).

Residues 31–121 (GTKATFHFRT…KDPLEGQRHC (91 aa)) form the PPIase FKBP-type domain. A Phosphoserine modification is found at Ser-43. TPR repeat units follow at residues 179 to 212 (VPLI…LKNL), 231 to 264 (TPLL…YDDN), and 265 to 298 (VKAY…DPAL).

In terms of assembly, interacts with RET in the pituitary gland; this interaction prevents the formation of the AIP-survivin complex.

The protein localises to the cytoplasm. In terms of biological role, may play a positive role in AHR-mediated (aromatic hydrocarbon receptor) signaling, possibly by influencing its receptivity for ligand and/or its nuclear targeting. This is AH receptor-interacting protein (Aip) from Rattus norvegicus (Rat).